The chain runs to 328 residues: Probable G-protein coupled receptor 82 (328 aa).

At 1–11 the chain is on the extracellular side; that stretch reads MTNNSTCIQPS. Residues Asn-3 and Asn-4 are each glycosylated (N-linked (GlcNAc...) asparagine). A helical membrane pass occupies residues 12 to 32; the sequence is VISTTALPVTYIFLFIIGLFG. The Cytoplasmic portion of the chain corresponds to 33 to 55; that stretch reads NSLAQWVFLTKIGKKTSTHIYLA. Residues 56–76 traverse the membrane as a helical segment; the sequence is NLVTANLLVCTAMPFMGIYFL. Residues 77–92 are Extracellular-facing; it reads RGFYWKYQSVQCRLVN. The chain crosses the membrane as a helical span at residues 93-115; sequence FLGTLSMHVSMFVSLLILSWIAI. Residues 116–156 are Cytoplasmic-facing; the sequence is SRYATLMKKESKQEATSCYERMFYGHVLKRFRQPNFARTMC. Residues 157–177 traverse the membrane as a helical segment; it reads IYIWGVVLVIIIPVTLYYSVV. Residues 178–197 are Extracellular-facing; the sequence is EATEEGQSQCYNRQMELGAR. A helical membrane pass occupies residues 198-218; the sequence is PSQIAGLIGTTFIGFSFLVVV. Topologically, residues 219–251 are cytoplasmic; that stretch reads TSYYSLVSHLRRVRTCTSITEKDLTYRSVKRHL. The chain crosses the membrane as a helical span at residues 252–272; that stretch reads LIIQVLLVVCFLPYSIFKPIF. Residues 273 to 328 lie on the Extracellular side of the membrane; that stretch reads YVLHQREGDCQQLNYLIEAKNILTCLASARSSTDPIIFLLLDKTFKKTLYGLLTKS.

The protein belongs to the G-protein coupled receptor 1 family.

Its subcellular location is the cell membrane. Functionally, orphan receptor. In Mus musculus (Mouse), this protein is Probable G-protein coupled receptor 82 (Gpr82).